We begin with the raw amino-acid sequence, 330 residues long: GMP reductase (330 aa).

Cys180 functions as the Thioimidate intermediate in the catalytic mechanism. NADP(+) is bound at residue 209–232 (LIADGGIRHNGDIAKSVRFGASMV).

This sequence belongs to the IMPDH/GMPR family. GuaC type 2 subfamily.

It carries out the reaction IMP + NH4(+) + NADP(+) = GMP + NADPH + 2 H(+). Functionally, catalyzes the irreversible NADPH-dependent deamination of GMP to IMP. It functions in the conversion of nucleobase, nucleoside and nucleotide derivatives of G to A nucleotides, and in maintaining the intracellular balance of A and G nucleotides. This chain is GMP reductase, found in Lactobacillus acidophilus (strain ATCC 700396 / NCK56 / N2 / NCFM).